Consider the following 387-residue polypeptide: MKWLLLLGLLALSECIVHKVPLVRKKSLRKNLIEKGLLQDYLKTHTPNLATKYFPKETFASVSTESLENYLDAEYFGTISIGTPPQEFTVIFDTGSSNLWVPSTYCSSLACFLHKRFNPDDSSTFQATSETLSITYGTGSMTGILGYDTVKVGNIEDTNQIFGLSKTEPGITFLVAPFDGILGLAYPSISASDATPVFDNMWNEGLVSEDLFSVYLSSNGEKGSMVMFGGIDSSYYTGSLNWVPVSHEGYWQITMDSITINGETIACADSCQAVVDTGTSLLAGPTSAISKIQSYIGASKNLLGENIISCSAIDSLPDIVFTINNVQYPLPASAYILKEDDDCLSGFDGMNLDTSYGELWILGDVFIRQYFTVFDRANNQVGLAAAA.

Residues 1–15 (MKWLLLLGLLALSEC) form the signal peptide. A propeptide spans 16-59 (IVHKVPLVRKKSLRKNLIEKGLLQDYLKTHTPNLATKYFPKETF) (activation peptide). In terms of domain architecture, Peptidase A1 spans 75 to 384 (YFGTISIGTP…DRANNQVGLA (310 aa)). Residue aspartate 93 is part of the active site. Cysteine 106 and cysteine 111 form a disulfide bridge. Position 129 is a phosphoserine (serine 129). A disulfide bridge connects residues cysteine 267 and cysteine 271. Residue aspartate 276 is part of the active site. A disulfide bond links cysteine 310 and cysteine 343.

The protein belongs to the peptidase A1 family.

The protein resides in the secreted. The enzyme catalyses Preferential cleavage: hydrophobic, preferably aromatic, residues in P1 and P1' positions. Cleaves 1-Phe-|-Val-2, 4-Gln-|-His-5, 13-Glu-|-Ala-14, 14-Ala-|-Leu-15, 15-Leu-|-Tyr-16, 16-Tyr-|-Leu-17, 23-Gly-|-Phe-24, 24-Phe-|-Phe-25 and 25-Phe-|-Tyr-26 bonds in the B chain of insulin.. Shows particularly broad specificity; although bonds involving phenylalanine and leucine are preferred, many others are also cleaved to some extent. The protein is Pepsin II-1 of Oryctolagus cuniculus (Rabbit).